Reading from the N-terminus, the 164-residue chain is SsrA-binding protein (164 aa).

Belongs to the SmpB family.

The protein resides in the cytoplasm. Functionally, required for rescue of stalled ribosomes mediated by trans-translation. Binds to transfer-messenger RNA (tmRNA), required for stable association of tmRNA with ribosomes. tmRNA and SmpB together mimic tRNA shape, replacing the anticodon stem-loop with SmpB. tmRNA is encoded by the ssrA gene; the 2 termini fold to resemble tRNA(Ala) and it encodes a 'tag peptide', a short internal open reading frame. During trans-translation Ala-aminoacylated tmRNA acts like a tRNA, entering the A-site of stalled ribosomes, displacing the stalled mRNA. The ribosome then switches to translate the ORF on the tmRNA; the nascent peptide is terminated with the 'tag peptide' encoded by the tmRNA and targeted for degradation. The ribosome is freed to recommence translation, which seems to be the essential function of trans-translation. This chain is SsrA-binding protein, found in Corynebacterium efficiens (strain DSM 44549 / YS-314 / AJ 12310 / JCM 11189 / NBRC 100395).